Consider the following 938-residue polypeptide: Glutamate receptor ionotropic, NMDA 1 (938 aa).

The first 18 residues, 1–18 (MSTMRLLTLALLFSCSVA), serve as a signal peptide directing secretion. Topologically, residues 19–559 (RAACDPKIVN…TLDSFMQPFQ (541 aa)) are extracellular. 10 N-linked (GlcNAc...) asparagine glycosylation sites follow: N61, N203, N239, N276, N300, N350, N368, N440, N471, and N491. C79 and C308 are oxidised to a cystine. 2 disulfides stabilise this stretch: C420/C454 and C436/C455. Glycine contacts are provided by P516, T518, and R523. A helical transmembrane segment spans residues 560 to 580 (STLWLLVGLSVHVVAVMLYLL). Residues 581–604 (DRFSPFGRFKVNSEEEEEDALTLS) are Cytoplasmic-facing. Residues 603 to 624 (LSSAMWFSWGVLLNSGIGEGAP) form a pore-forming region. Positions 605–615 (SAMWFSWGVLL) form an intramembrane region, discontinuously helical. Residues 616–627 (NSGIGEGAPRSF) are Cytoplasmic-facing. A helical membrane pass occupies residues 628–648 (SARILGMVWAGFAMIIVASYT). The Extracellular portion of the chain corresponds to 649-811 (ANLAAFLVLD…SNAPATLTFE (163 aa)). N674 carries N-linked (GlcNAc...) asparagine glycosylation. Positions 688 and 732 each coordinate glycine. Cysteines 744 and 798 form a disulfide. N-linked (GlcNAc...) asparagine glycosylation occurs at N771. A helical membrane pass occupies residues 812-835 (NMAGVFMLVAGGIVAGIFLIFIEI). Residues 836-938 (AYKRHKDARR…LQLCSRHRES (103 aa)) are Cytoplasmic-facing. A phosphoserine; by PKC mark is found at S889, S890, S896, and S897. Residues 889-938 (SSFKRRRSSKDTSTGGGRGALQNQKDTVLPRRAIEREEGQLQLCSRHRES) are disordered. The span at 916–927 (VLPRRAIEREEG) shows a compositional bias: basic and acidic residues.

It belongs to the glutamate-gated ion channel (TC 1.A.10.1) family. NR1/GRIN1 subfamily. As to quaternary structure, heterotetramer; the NMDAR subunits are modular and harbor tiered domains that function in concert to regulate opening and closing of the cation-selective ion channel pore. Forms heterotetrameric channels composed of two GluN1/zeta subunits (GRIN1), and two identical GluN2/epsilon subunits (GRIN2A, GRIN2B, GRIN2C or GRIN2D) or GluN3 subunits (GRIN3A or GRIN3B) (in vitro). Can also form heterotetrameric channels that contain at least two GluN1 subunits and at least two different GluN2 subunits (or a combination of one GluN2 and one GluN3 subunits) (in vitro). In vivo, the subunit composition may vary in function of the expression levels of the different subunits. Found in a complex with GRIN2A or GRIN2B, GRIN3A and PPP2CB. Found in a complex with GRIN2A or GRIN2B and GRIN3B. Interacts with SNX27 (via PDZ domain); the interaction is required for recycling to the plasma membrane when endocytosed and prevent degradation in lysosomes. Interacts with DLG4 and MPDZ. Interacts with LRFN1 and LRFN2. Interacts with MYZAP. Found in a complex with DLG4 and PRR7. Found in a complex with GRIN2B and PRR7. Interacts with PRR7; the interaction is reduced following NMDA receptor activity. NMDA is probably regulated by C-terminal phosphorylation of an isoform of GRIN1 by PKC. Dephosphorylated on Ser-897 probably by protein phosphatase 2A (PPP2CB). Its phosphorylated state is influenced by the formation of the NMDAR-PPP2CB complex and the NMDAR channel activity.

It localises to the cell membrane. The protein resides in the postsynaptic cell membrane. Its subcellular location is the postsynaptic density membrane. The protein localises to the synaptic cell membrane. It catalyses the reaction Ca(2+)(in) = Ca(2+)(out). The enzyme catalyses Na(+)(in) = Na(+)(out). It carries out the reaction K(+)(in) = K(+)(out). Its activity is regulated as follows. NMDA glutamate receptor activity is inhbited by Mg2(+) in a voltage-dependent manner; Mg2(+)-induced blockade occurs only at negative potentials and decreases with membrane depolarization. 7-chlorokynurenate (50 uM) or Zn2(+) (100 uM) partially inhibit the NMDA glutamate receptor activity, while acide 2-amino-5-phosphonovalerique(100 uM) almost completely blocked the NMDA glutamate receptor activity. Dizocilpine (1 uM) results in long lasting and almost complete block of the NMDA glutamate receptor activity. Its function is as follows. Component of N-methyl-D-aspartate (NMDA) receptors (NMDARs) that function as heterotetrameric, ligand-gated cation channels with high calcium permeability and voltage-dependent block by Mg(2+). NMDARs participate in synaptic plasticity for learning and memory formation by contributing to the long-term potentiation (LTP). Channel activation requires binding of the neurotransmitter L-glutamate to the GluN2 subunit, glycine or D-serine binding to the GluN1 subunit, plus membrane depolarization to eliminate channel inhibition by Mg(2+). NMDARs mediate simultaneously the potasium efflux and the influx of calcium and sodium. Each GluN2 or GluN3 subunit confers differential attributes to channel properties, including activation, deactivation and desensitization kinetics, pH sensitivity, Ca2(+) permeability, and binding to allosteric modulators. This is Glutamate receptor ionotropic, NMDA 1 from Homo sapiens (Human).